A 388-amino-acid polypeptide reads, in one-letter code: Chorismate synthase (388 aa).

NADP(+) contacts are provided by Arg-39 and Arg-45. FMN contacts are provided by residues 130 to 132, 251 to 252, Gly-296, 311 to 315, and Arg-337; these read RSS, NA, and KPIPT.

The protein belongs to the chorismate synthase family. Homotetramer. The cofactor is FMNH2.

The catalysed reaction is 5-O-(1-carboxyvinyl)-3-phosphoshikimate = chorismate + phosphate. It functions in the pathway metabolic intermediate biosynthesis; chorismate biosynthesis; chorismate from D-erythrose 4-phosphate and phosphoenolpyruvate: step 7/7. Functionally, catalyzes the anti-1,4-elimination of the C-3 phosphate and the C-6 proR hydrogen from 5-enolpyruvylshikimate-3-phosphate (EPSP) to yield chorismate, which is the branch point compound that serves as the starting substrate for the three terminal pathways of aromatic amino acid biosynthesis. This reaction introduces a second double bond into the aromatic ring system. The sequence is that of Chorismate synthase from Streptococcus pyogenes serotype M5 (strain Manfredo).